Consider the following 262-residue polypeptide: 3-methyl-2-oxobutanoate hydroxymethyltransferase (262 aa).

2 residues coordinate Mg(2+): Asp42 and Asp81. 3-methyl-2-oxobutanoate is bound by residues 42–43 (DS), Asp81, and Lys110. Mg(2+) is bound at residue Glu112. Glu180 acts as the Proton acceptor in catalysis.

This sequence belongs to the PanB family. In terms of assembly, homodecamer; pentamer of dimers. Requires Mg(2+) as cofactor.

Its subcellular location is the cytoplasm. The catalysed reaction is 3-methyl-2-oxobutanoate + (6R)-5,10-methylene-5,6,7,8-tetrahydrofolate + H2O = 2-dehydropantoate + (6S)-5,6,7,8-tetrahydrofolate. Its pathway is cofactor biosynthesis; (R)-pantothenate biosynthesis; (R)-pantoate from 3-methyl-2-oxobutanoate: step 1/2. Catalyzes the reversible reaction in which hydroxymethyl group from 5,10-methylenetetrahydrofolate is transferred onto alpha-ketoisovalerate to form ketopantoate. In Legionella pneumophila (strain Corby), this protein is 3-methyl-2-oxobutanoate hydroxymethyltransferase.